A 132-amino-acid chain; its full sequence is Secreted RxLR effector protein RXLR-C22 (132 aa).

The signal sequence occupies residues 1-21 (MRSLVWAVIATLIVLTPFSEA). The RxLR-dEER signature appears at 56–74 (RKLQSDSVKKGDSTGLEER). The N-linked (GlcNAc...) asparagine glycan is linked to Asn-116.

Belongs to the RxLR effector family.

The protein resides in the secreted. The protein localises to the host Golgi apparatus. In terms of biological role, secreted effector that does not suppress pattern-triggered immunity (PTI) in plant host. The polypeptide is Secreted RxLR effector protein RXLR-C22 (Plasmopara halstedii (Downy mildew of sunflower)).